A 152-amino-acid polypeptide reads, in one-letter code: 3-dehydroquinate dehydratase (152 aa).

The active-site Proton acceptor is the tyrosine 26. Asparagine 77, histidine 83, and aspartate 90 together coordinate substrate. Histidine 103 functions as the Proton donor in the catalytic mechanism. Substrate contacts are provided by residues 104-105 (LS) and arginine 114.

The protein belongs to the type-II 3-dehydroquinase family. As to quaternary structure, homododecamer.

It catalyses the reaction 3-dehydroquinate = 3-dehydroshikimate + H2O. Its pathway is metabolic intermediate biosynthesis; chorismate biosynthesis; chorismate from D-erythrose 4-phosphate and phosphoenolpyruvate: step 3/7. Functionally, catalyzes a trans-dehydration via an enolate intermediate. This Tolumonas auensis (strain DSM 9187 / NBRC 110442 / TA 4) protein is 3-dehydroquinate dehydratase.